Here is a 444-residue protein sequence, read N- to C-terminus: Exodeoxyribonuclease 7 large subunit (444 aa).

This sequence belongs to the XseA family. Heterooligomer composed of large and small subunits.

The protein localises to the cytoplasm. It catalyses the reaction Exonucleolytic cleavage in either 5'- to 3'- or 3'- to 5'-direction to yield nucleoside 5'-phosphates.. Functionally, bidirectionally degrades single-stranded DNA into large acid-insoluble oligonucleotides, which are then degraded further into small acid-soluble oligonucleotides. This chain is Exodeoxyribonuclease 7 large subunit, found in Pseudoalteromonas atlantica (strain T6c / ATCC BAA-1087).